The primary structure comprises 620 residues: Chaperone protein HscA homolog (620 aa).

The protein belongs to the heat shock protein 70 family.

Functionally, chaperone involved in the maturation of iron-sulfur cluster-containing proteins. Has a low intrinsic ATPase activity which is markedly stimulated by HscB. This is Chaperone protein HscA homolog from Paracidovorax citrulli (strain AAC00-1) (Acidovorax citrulli).